Here is a 188-residue protein sequence, read N- to C-terminus: Elongation factor P-like protein (188 aa).

This sequence belongs to the elongation factor P family.

In Aliivibrio fischeri (strain ATCC 700601 / ES114) (Vibrio fischeri), this protein is Elongation factor P-like protein.